Consider the following 325-residue polypeptide: Reaction center protein M chain (325 aa).

Transmembrane regions (helical) follow at residues 53–79 (LGFTGTLSIIFGFMAIFIIGFNMLASV), 111–140 (EGGWWLMAGFFLTMSILLWWVRTYKRAEAL), and 143–168 (SQHLSWAFAAAIFFYLSLGFIRPVMM). The (7R,8Z)-bacteriochlorophyll b site is built by His182 and His202. The helical transmembrane segment at 198 to 226 (YNPFHMLSIAFLYGSALLFAMHGATILAV) threads the bilayer. Fe cation contacts are provided by His219 and Glu234. Residue Trp252 participates in a ubiquinone binding. His266 provides a ligand contact to Fe cation.

The protein belongs to the reaction center PufL/M/PsbA/D family. As to quaternary structure, reaction center is composed of four bacteriochlorophylls, two bacteriopheophytins, two ubiquinones, one iron, and two highly hydrophobic polypeptide chains (designated L and M).

It localises to the cellular chromatophore membrane. The reaction center is a membrane-bound complex that mediates the initial photochemical event in the electron transfer process of photosynthesis. The polypeptide is Reaction center protein M chain (pufM) (Allochromatium vinosum (strain ATCC 17899 / DSM 180 / NBRC 103801 / NCIMB 10441 / D) (Chromatium vinosum)).